An 813-amino-acid chain; its full sequence is Xaa-Pro dipeptidyl-peptidase (813 aa).

Catalysis depends on charge relay system residues serine 375, aspartate 495, and histidine 526.

This sequence belongs to the peptidase S15 family. Homodimer.

It localises to the cytoplasm. The catalysed reaction is Hydrolyzes Xaa-Pro-|- bonds to release unblocked, N-terminal dipeptides from substrates including Ala-Pro-|-p-nitroanilide and (sequentially) Tyr-Pro-|-Phe-Pro-|-Gly-Pro-|-Ile.. Removes N-terminal dipeptides sequentially from polypeptides having unsubstituted N-termini provided that the penultimate residue is proline. This chain is Xaa-Pro dipeptidyl-peptidase, found in Lactiplantibacillus plantarum (strain ATCC BAA-793 / NCIMB 8826 / WCFS1) (Lactobacillus plantarum).